Reading from the N-terminus, the 270-residue chain is 4-hydroxy-tetrahydrodipicolinate reductase (270 aa).

Residues G9 to M14 and E35 each bind NAD(+). R36 is an NADP(+) binding site. Residues G99–T101 and A123–F126 contribute to the NAD(+) site. H156 serves as the catalytic Proton donor/acceptor. H157 contributes to the (S)-2,3,4,5-tetrahydrodipicolinate binding site. The active-site Proton donor is the K160. G166–T167 serves as a coordination point for (S)-2,3,4,5-tetrahydrodipicolinate.

Belongs to the DapB family.

The protein localises to the cytoplasm. The catalysed reaction is (S)-2,3,4,5-tetrahydrodipicolinate + NAD(+) + H2O = (2S,4S)-4-hydroxy-2,3,4,5-tetrahydrodipicolinate + NADH + H(+). The enzyme catalyses (S)-2,3,4,5-tetrahydrodipicolinate + NADP(+) + H2O = (2S,4S)-4-hydroxy-2,3,4,5-tetrahydrodipicolinate + NADPH + H(+). Its pathway is amino-acid biosynthesis; L-lysine biosynthesis via DAP pathway; (S)-tetrahydrodipicolinate from L-aspartate: step 4/4. Functionally, catalyzes the conversion of 4-hydroxy-tetrahydrodipicolinate (HTPA) to tetrahydrodipicolinate. This chain is 4-hydroxy-tetrahydrodipicolinate reductase, found in Haemophilus influenzae (strain ATCC 51907 / DSM 11121 / KW20 / Rd).